A 208-amino-acid chain; its full sequence is Uracil phosphoribosyltransferase (208 aa).

5-phospho-alpha-D-ribose 1-diphosphate contacts are provided by residues Arg78, Arg103, and 130 to 138 (DPMLATGGS). Uracil is bound by residues Ile193 and 198-200 (GDA). Asp199 contacts 5-phospho-alpha-D-ribose 1-diphosphate.

This sequence belongs to the UPRTase family. Mg(2+) serves as cofactor.

The enzyme catalyses UMP + diphosphate = 5-phospho-alpha-D-ribose 1-diphosphate + uracil. It functions in the pathway pyrimidine metabolism; UMP biosynthesis via salvage pathway; UMP from uracil: step 1/1. Allosterically activated by GTP. Catalyzes the conversion of uracil and 5-phospho-alpha-D-ribose 1-diphosphate (PRPP) to UMP and diphosphate. The chain is Uracil phosphoribosyltransferase from Shewanella woodyi (strain ATCC 51908 / MS32).